Consider the following 254-residue polypeptide: Decaprenylphosphoryl-2-keto-beta-D-erythro-pentose reductase (254 aa).

Residue Asp-67 participates in NAD(+) binding. Tyr-160 functions as the Proton acceptor in the catalytic mechanism. Residue Lys-164 participates in NAD(+) binding.

Belongs to the short-chain dehydrogenases/reductases (SDR) family. In terms of assembly, interacts with DprE1 to form an epimerase complex.

It localises to the periplasm. The enzyme catalyses trans,octa-cis-decaprenylphospho-beta-D-arabinofuranose + NAD(+) = trans,octa-cis-decaprenylphospho-beta-D-erythro-pentofuranosid-2-ulose + NADH + H(+). It participates in cell wall biogenesis; cell wall polysaccharide biosynthesis. Functionally, component of the DprE1-DprE2 complex that catalyzes the 2-step epimerization of decaprenyl-phospho-ribose (DPR) to decaprenyl-phospho-arabinose (DPA), a key precursor that serves as the arabinose donor required for the synthesis of cell-wall arabinans. DprE1 catalyzes the first step of epimerization, namely FAD-dependent oxidation of the C2' hydroxyl of DPR to yield the keto intermediate decaprenyl-phospho-2'-keto-D-arabinose (DPX). The intermediate DPX is then transferred to DprE2 subunit of the epimerase complex, most probably through a 'substrate channel' at the interface of DprE1-DprE2 complex. DprE2 then catalyzes the second step of epimerization, the NAD(+)-dependent reduction of DPX that leads to the formation of DPA. The polypeptide is Decaprenylphosphoryl-2-keto-beta-D-erythro-pentose reductase (Mycobacterium bovis (strain ATCC BAA-935 / AF2122/97)).